The following is a 101-amino-acid chain: NAD(P)H-quinone oxidoreductase subunit 4L, chloroplastic (101 aa).

A run of 3 helical transmembrane segments spans residues 2-22 (MLEHVLVLSAYLFSIGIYGLI), 32-52 (MCLELILNAVNLNFVTFSDFF), and 61-81 (IFSIFVIAIAAAEAAIGPAIV).

The protein belongs to the complex I subunit 4L family. In terms of assembly, NDH is composed of at least 16 different subunits, 5 of which are encoded in the nucleus.

The protein localises to the plastid. Its subcellular location is the chloroplast thylakoid membrane. The catalysed reaction is a plastoquinone + NADH + (n+1) H(+)(in) = a plastoquinol + NAD(+) + n H(+)(out). It catalyses the reaction a plastoquinone + NADPH + (n+1) H(+)(in) = a plastoquinol + NADP(+) + n H(+)(out). NDH shuttles electrons from NAD(P)H:plastoquinone, via FMN and iron-sulfur (Fe-S) centers, to quinones in the photosynthetic chain and possibly in a chloroplast respiratory chain. The immediate electron acceptor for the enzyme in this species is believed to be plastoquinone. Couples the redox reaction to proton translocation, and thus conserves the redox energy in a proton gradient. The sequence is that of NAD(P)H-quinone oxidoreductase subunit 4L, chloroplastic from Fagopyrum esculentum subsp. ancestrale (Wild buckwheat).